The sequence spans 642 residues: DNA gyrase subunit B (642 aa).

The 115-residue stretch at C422 to P536 folds into the Toprim domain. Residues E428, D501, and D503 each coordinate Mg(2+).

The protein belongs to the type II topoisomerase family. As to quaternary structure, heterotetramer, composed of two GyrA and two GyrB chains. Within the heterotetramer, GyrA contains the active site tyrosine that forms a covalent intermediate with the DNA, while GyrB contributes the cofactor binding sites and catalyzes ATP hydrolysis. Mg(2+) serves as cofactor. Requires Mn(2+) as cofactor. It depends on Ca(2+) as a cofactor.

It localises to the cytoplasm. The enzyme catalyses ATP-dependent breakage, passage and rejoining of double-stranded DNA.. Pyrrolopyrimidines inhibit both GyrB and its paralog in topoisomerase IV (parE). In terms of biological role, DNA gyrase negatively supercoils closed circular double-stranded DNA in an ATP-dependent manner and also catalyzes the interconversion of other topological isomers of double-stranded DNA rings, including catenanes and knotted rings. In Enterococcus faecalis (strain ATCC 700802 / V583), this protein is DNA gyrase subunit B.